Consider the following 691-residue polypeptide: Elongation factor G (691 aa).

One can recognise a tr-type G domain in the interval 8–282 (ERVRNIGIAA…AVVNYLPAPV (275 aa)). Residues 17–24 (AHIDAGKT), 81–85 (DTPGH), and 135–138 (NKMD) contribute to the GTP site.

This sequence belongs to the TRAFAC class translation factor GTPase superfamily. Classic translation factor GTPase family. EF-G/EF-2 subfamily.

The protein localises to the cytoplasm. Catalyzes the GTP-dependent ribosomal translocation step during translation elongation. During this step, the ribosome changes from the pre-translocational (PRE) to the post-translocational (POST) state as the newly formed A-site-bound peptidyl-tRNA and P-site-bound deacylated tRNA move to the P and E sites, respectively. Catalyzes the coordinated movement of the two tRNA molecules, the mRNA and conformational changes in the ribosome. The sequence is that of Elongation factor G from Prochlorococcus marinus (strain NATL1A).